We begin with the raw amino-acid sequence, 104 residues long: MIKLKIKSGDIVRVIAGDHKGAEGKVLRVYREKNKAIVEGVNLVSKHTKPSAKNPQGGIVKKEASIQISNIALIDPKTKETTRVGIRVEGDKKVRFSKKSNQVL.

This sequence belongs to the universal ribosomal protein uL24 family. In terms of assembly, part of the 50S ribosomal subunit.

Its function is as follows. One of two assembly initiator proteins, it binds directly to the 5'-end of the 23S rRNA, where it nucleates assembly of the 50S subunit. In terms of biological role, one of the proteins that surrounds the polypeptide exit tunnel on the outside of the subunit. The protein is Large ribosomal subunit protein uL24 of Flavobacterium johnsoniae (strain ATCC 17061 / DSM 2064 / JCM 8514 / BCRC 14874 / CCUG 350202 / NBRC 14942 / NCIMB 11054 / UW101) (Cytophaga johnsonae).